The following is a 144-amino-acid chain: Transcriptional regulator SlyA (144 aa).

The region spanning 2-135 is the HTH marR-type domain; the sequence is ESPLGSDLAR…LITLIAKLEH (134 aa). The H-T-H motif DNA-binding region spans 49–72; sequence QIQLAKAIGIEQPSLVRTLDQLEE.

The protein belongs to the SlyA family. As to quaternary structure, homodimer.

Its function is as follows. Transcription regulator that can specifically activate or repress expression of target genes. The polypeptide is Transcriptional regulator SlyA (Escherichia coli (strain 55989 / EAEC)).